The sequence spans 240 residues: Cilia- and flagella-associated protein 77 (240 aa).

This sequence belongs to the CFAP77 family.

The protein resides in the cytoplasm. The protein localises to the cytoskeleton. It is found in the cilium axoneme. It localises to the flagellum axoneme. Microtubule inner protein (MIP) part of the dynein-decorated doublet microtubules (DMTs) in cilia axoneme, which is required for motile cilia beating. The polypeptide is Cilia- and flagella-associated protein 77 (Danio rerio (Zebrafish)).